A 313-amino-acid polypeptide reads, in one-letter code: Olfactory receptor 1J4 (313 aa).

The Extracellular portion of the chain corresponds to 1–25; sequence MKRENQSSVSEFLLLDLPIWPEQQA. Residue Asn-5 is glycosylated (N-linked (GlcNAc...) asparagine). Residues 26-49 form a helical membrane-spanning segment; that stretch reads VFFTLFLGMYLITVLGNLLIILLI. The Cytoplasmic segment spans residues 50–57; sequence RLDSHLHT. A helical membrane pass occupies residues 58 to 79; sequence PMFFFLSHLALTDISLSSVTVP. Residues 80-100 lie on the Extracellular side of the membrane; sequence KMLLSMQTQDQSILYAGCVTQ. Cys-97 and Cys-189 are joined by a disulfide. Residues 101–120 traverse the membrane as a helical segment; that stretch reads MYFFIFFTDLDNFLLTSMAY. Residues 121–139 are Cytoplasmic-facing; the sequence is DRYVAICHPLRYTTIMKEG. Residues 140–158 form a helical membrane-spanning segment; that stretch reads LCNLLVTVSWILSCTNALS. Topologically, residues 159-195 are extracellular; sequence HTLLLAQLSFCADNTIPHFFCDLVALLKLSCSDISLN. A helical transmembrane segment spans residues 196 to 219; sequence ELVIFTVGQAVITLPLICILISYG. Topologically, residues 220–236 are cytoplasmic; that stretch reads HIGVTILKAPSTKGIFK. The chain crosses the membrane as a helical span at residues 237 to 259; that stretch reads ALSTCGSHLSVVSLYYGTIIGLY. Topologically, residues 260-272 are extracellular; the sequence is FLPSSSASSDKDV. The helical transmembrane segment at 273–292 threads the bilayer; the sequence is IASVMYTVITPLLNPFIYSL. The Cytoplasmic portion of the chain corresponds to 293-313; that stretch reads RNRDIKGALERLFNRATVLSQ.

Belongs to the G-protein coupled receptor 1 family.

It localises to the cell membrane. Its function is as follows. Odorant receptor. In Homo sapiens (Human), this protein is Olfactory receptor 1J4 (OR1J4).